Reading from the N-terminus, the 1608-residue chain is Mitogen-activated protein kinase kinase kinase 4 (1608 aa).

Over residues 1–23 the composition is skewed to low complexity; the sequence is MREAAAALVPPPAFAVTPAAAME. Disordered regions lie at residues 1-136 and 429-478; these read MREA…ENVE and IPSP…RQPI. The segment covering 24 to 37 has biased composition (pro residues); that stretch reads EPPPPPPPPPPPPE. Acidic residues predominate over residues 66–76; sequence SDLEDFSDETN. A Phosphoserine modification is found at Ser84. A compositionally biased stretch (basic residues) spans 91–101; it reads QMKRMSTKHQR. Ser431 bears the Phosphoserine mark. Thr447 carries the phosphothreonine modification. Phosphoserine occurs at positions 456 and 457. Acidic residues predominate over residues 456-466; that stretch reads SSTDESEEEQI. Residue Thr458 is modified to Phosphothreonine. Ser461, Ser481, and Ser499 each carry phosphoserine. Disordered regions lie at residues 1157-1190, 1202-1231, and 1244-1274; these read CHSD…GSPA, ASRP…SVPE, and FRSL…TRRS. Polar residues predominate over residues 1217–1230; sequence SISSAHDTRGSSVP. Residues Ser1252 and Ser1274 each carry the phosphoserine modification. Positions 1252–1261 are enriched in basic and acidic residues; sequence SPTEERDEPA. A Protein kinase domain is found at 1343-1601; that stretch reads WQRGNKIGEG…ASQLLDHSFV (259 aa). Residues 1349 to 1357 and Lys1372 each bind ATP; that span reads IGEGQYGKV. Residue Asp1463 is the Proton acceptor of the active site.

This sequence belongs to the protein kinase superfamily. STE Ser/Thr protein kinase family. MAP kinase kinase kinase subfamily. As to quaternary structure, monomer and homodimer. Homodimerization enhances kinase activity. Interacts with TRAF4; this promotes homodimerization. Binds both upstream activators and downstream substrates in multimolecular complexes. Interacts with AXIN1 and DIXDC1; interaction with DIXDC1 prevents interaction with AXIN1. Interacts with GADD45 and MAP2K6. Interacts with ZFP36; this interaction enhances the association with SH3KBP1/CIN85. Interacts with SH3KBP1; this interaction enhances the association with ZFP36. Interacts with CDC42. It depends on Mg(2+) as a cofactor. Expressed at high levels in heart, placenta, skeletal muscle and pancreas, and at lower levels in other tissues.

Its subcellular location is the cytoplasm. It localises to the perinuclear region. The enzyme catalyses L-seryl-[protein] + ATP = O-phospho-L-seryl-[protein] + ADP + H(+). It carries out the reaction L-threonyl-[protein] + ATP = O-phospho-L-threonyl-[protein] + ADP + H(+). Its activity is regulated as follows. N-terminal autoinhibitory domain interacts with the C-terminal kinase domain, inhibiting kinase activity, and preventing interaction with its substrate, MAP2K6. The GADD45 proteins activate the kinase by binding to the N-terminal domain. Activated by phosphorylation on Thr-1505. Functionally, component of a protein kinase signal transduction cascade. Activates the CSBP2, P38 and JNK MAPK pathways, but not the ERK pathway. Specifically phosphorylates and activates MAP2K4 and MAP2K6. The sequence is that of Mitogen-activated protein kinase kinase kinase 4 (MAP3K4) from Homo sapiens (Human).